A 209-amino-acid chain; its full sequence is Protease (209 aa).

Catalysis depends on residues H55, D72, and C123.

It belongs to the peptidase C5 family. Interacts with protease cofactor pVI-C; this interaction is necessary for protease activation.

The protein localises to the virion. The protein resides in the host nucleus. It catalyses the reaction Cleaves proteins of the adenovirus and its host cell at two consensus sites: -Yaa-Xaa-Gly-Gly-|-Xaa- and -Yaa-Xaa-Gly-Xaa-|-Gly- (in which Yaa is Met, Ile or Leu, and Xaa is any amino acid).. Requires DNA and protease cofactor for maximal activation. Inside nascent virions, becomes partially activated by binding to the viral DNA, allowing it to cleave the cofactor that binds to the protease and fully activates it. Actin, like the viral protease cofactor, seems to act as a cofactor in the cleavage of cytokeratin 18 and of actin itself. In terms of biological role, cleaves viral precursor proteins (pTP, pIIIa, pVI, pVII, pVIII, and pX) inside newly assembled particles giving rise to mature virions. Protease complexed to its cofactor slides along the viral DNA to specifically locate and cleave the viral precursors. Mature virions have a weakened organization compared to the unmature virions, thereby facilitating subsequent uncoating. Without maturation, the particle lacks infectivity and is unable to uncoat. Late in adenovirus infection, in the cytoplasm, may participate in the cytoskeleton destruction. Cleaves host cell cytoskeletal keratins K7 and K18. In Human adenovirus D serotype 9 (HAdV-9), this protein is Protease.